The primary structure comprises 205 residues: Thiamine-phosphate synthase (205 aa).

4-amino-2-methyl-5-(diphosphooxymethyl)pyrimidine is bound by residues 34-38 (QLRCK) and asparagine 66. 2 residues coordinate Mg(2+): aspartate 67 and aspartate 86. Serine 105 is a binding site for 4-amino-2-methyl-5-(diphosphooxymethyl)pyrimidine. Position 131 to 133 (131 to 133 (TTT)) interacts with 2-[(2R,5Z)-2-carboxy-4-methylthiazol-5(2H)-ylidene]ethyl phosphate. Residue lysine 134 coordinates 4-amino-2-methyl-5-(diphosphooxymethyl)pyrimidine. Residue glycine 163 participates in 2-[(2R,5Z)-2-carboxy-4-methylthiazol-5(2H)-ylidene]ethyl phosphate binding.

This sequence belongs to the thiamine-phosphate synthase family. The cofactor is Mg(2+).

It carries out the reaction 2-[(2R,5Z)-2-carboxy-4-methylthiazol-5(2H)-ylidene]ethyl phosphate + 4-amino-2-methyl-5-(diphosphooxymethyl)pyrimidine + 2 H(+) = thiamine phosphate + CO2 + diphosphate. The enzyme catalyses 2-(2-carboxy-4-methylthiazol-5-yl)ethyl phosphate + 4-amino-2-methyl-5-(diphosphooxymethyl)pyrimidine + 2 H(+) = thiamine phosphate + CO2 + diphosphate. The catalysed reaction is 4-methyl-5-(2-phosphooxyethyl)-thiazole + 4-amino-2-methyl-5-(diphosphooxymethyl)pyrimidine + H(+) = thiamine phosphate + diphosphate. Its pathway is cofactor biosynthesis; thiamine diphosphate biosynthesis; thiamine phosphate from 4-amino-2-methyl-5-diphosphomethylpyrimidine and 4-methyl-5-(2-phosphoethyl)-thiazole: step 1/1. Condenses 4-methyl-5-(beta-hydroxyethyl)thiazole monophosphate (THZ-P) and 2-methyl-4-amino-5-hydroxymethyl pyrimidine pyrophosphate (HMP-PP) to form thiamine monophosphate (TMP). This is Thiamine-phosphate synthase from Neisseria meningitidis serogroup A / serotype 4A (strain DSM 15465 / Z2491).